Consider the following 1102-residue polypeptide: Voltage-gated delayed rectifier potassium channel KCNH8 (1102 aa).

The Cytoplasmic portion of the chain corresponds to 1–225 (MPVMKGLLAP…HFSTFKAGWD (225 aa)). The 73-residue stretch at 18 to 90 (IATRFDGTHS…LQIEKSLEEK (73 aa)) folds into the PAS domain. The PAC domain maps to 93–145 (FKGEIMFYKKNGAPFWCLLDIVPIKNEKGDVVLFLASFKDITDTKVKITSEDK). A helical transmembrane segment spans residues 226–246 (WLILLATFYVAVTVPYNVCFI). Residues 247-255 (GNEDLSTTR) are Extracellular-facing. The helical transmembrane segment at 256 to 276 (STTVSDIAVEILFIIDIILNF) threads the bilayer. At 277–298 (RTTYVSKSGQVIFEARSICIHY) the chain is on the cytoplasmic side. A helical membrane pass occupies residues 299–319 (VTTWFIIDLIAALPFDLLYAF). N-linked (GlcNAc...) asparagine glycosylation is present at Asn-320. The Extracellular portion of the chain corresponds to 320 to 327 (NVTVVSLV). Residues 328–348 (HLLKTVRLLRLLRLLQKLDRY) traverse the membrane as a helical; Voltage-sensor segment. Over 349–353 (SQHST) the chain is Cytoplasmic. The helical transmembrane segment at 354-374 (IVLTLLMSMFALLAHWMACIW) threads the bilayer. At 375 to 419 (YVIGKMEREDNSLLKWEVGWLHELGKRLESPYYGNNTLGGPSIRS) the chain is on the extracellular side. N-linked (GlcNAc...) asparagine glycosylation is present at Asn-409. Residues 420-440 (AYIAALYFTLSSLTSVGFGNV) constitute an intramembrane region (pore-forming). The short motif at 434–439 (SVGFGN) is the Selectivity filter element. Residues 441 to 448 (SANTDAEK) lie on the Extracellular side of the membrane. A helical transmembrane segment spans residues 449 to 469 (IFSICTMLIGALMHALVFGNV). Over 470-1102 (TAIIQRMYSR…DVKDSKAINV (633 aa)) the chain is Cytoplasmic. The cNMP-binding domain stretch occupies residues 551–668 (LFECASRGCL…HKFVEDIQHD (118 aa)). 4 disordered regions span residues 683-744 (SRLS…KTGS), 762-793 (PFHS…KEKN), 818-845 (EDGN…ISPS), and 960-983 (LVGS…LHHS). Residues 710–723 (VEDEEEEEVEEEET) show a composition bias toward acidic residues. Basic and acidic residues predominate over residues 777–793 (TKQEADPPNHGTRKEKN). The segment covering 968–982 (TEAHEQSPVDSELHH) has biased composition (basic and acidic residues).

The protein belongs to the potassium channel family. H (Eag) (TC 1.A.1.20) subfamily. Kv12.1/KCNH8 sub-subfamily. As to quaternary structure, the potassium channel is probably composed of a homo- or heterotetrameric complex of pore-forming alpha subunits that can associate with modulating beta subunits. As to expression, detected in superior cervical, mesenteric and coeliac ganglia. Expressed in brain (piriform cortex, olfactory tubercle, cerebral cortex, hippocampus pyramidial cells and dentate gyrus and basal ganglia of caudate/putamen and accumbens nucleus). Expressed in pituitary.

Its subcellular location is the membrane. The catalysed reaction is K(+)(in) = K(+)(out). Functionally, pore-forming (alpha) subunit of a voltage-gated delayed rectifier potassium channel that mediates outward-rectifying potassium currents. Elicits a slowly activating, non-inactivating and slowly deactivation outwards potassium current at depolarizating voltages from -30 mV to +50mV. Shows no obvious change in the activation rate from different holding potentials. Activation is strongly dependent on the pH of the external solution. This chain is Voltage-gated delayed rectifier potassium channel KCNH8, found in Rattus norvegicus (Rat).